The primary structure comprises 69 residues: ATP synthase protein 8 (69 aa).

Residues 8–24 (TWTLTISLMIISLFCIY) form a helical membrane-spanning segment. Lysine 55 carries the post-translational modification N6-acetyllysine; alternate. Lysine 55 is modified (N6-succinyllysine; alternate). Lysine 58 is modified (N6-acetyllysine).

It belongs to the ATPase protein 8 family. In terms of assembly, F-type ATPases have 2 components, CF(1) - the catalytic core - and CF(0) - the membrane proton channel. Component of an ATP synthase complex composed of ATP5PB, ATP5MC1, ATP5F1E, ATP5PD, ATP5ME, ATP5PF, ATP5MF, MT-ATP6, MT-ATP8, ATP5F1A, ATP5F1B, ATP5F1D, ATP5F1C, ATP5PO, ATP5MG, ATP5MK and ATP5MJ. Interacts with PRICKLE3.

The protein localises to the mitochondrion membrane. Functionally, mitochondrial membrane ATP synthase (F(1)F(0) ATP synthase or Complex V) produces ATP from ADP in the presence of a proton gradient across the membrane which is generated by electron transport complexes of the respiratory chain. F-type ATPases consist of two structural domains, F(1) - containing the extramembraneous catalytic core and F(0) - containing the membrane proton channel, linked together by a central stalk and a peripheral stalk. During catalysis, ATP synthesis in the catalytic domain of F(1) is coupled via a rotary mechanism of the central stalk subunits to proton translocation. Part of the complex F(0) domain. Minor subunit located with subunit a in the membrane. The protein is ATP synthase protein 8 (MT-ATP8) of Didelphis virginiana (North American opossum).